The primary structure comprises 1119 residues: Leucine-rich repeats and immunoglobulin-like domains protein 3 (1119 aa).

Residues Met-1–Ala-24 form the signal peptide. One can recognise an LRRNT domain in the interval Pro-38–Ser-74. LRR repeat units follow at residues Trp-75–His-96, Ser-99–Ser-120, Asn-122–Lys-142, Ser-146–Leu-167, Gln-168–Asn-189, Thr-193–Leu-214, Gln-216–Gly-237, Ala-240–Gly-261, Asn-264–Gly-285, Met-288–Phe-309, Lys-312–Gly-333, Leu-336–Gly-357, Ser-360–Phe-382, Lys-387–Gly-408, and Ala-411–Gln-432. N-linked (GlcNAc...) asparagine glycosylation is found at Asn-122 and Asn-156. N-linked (GlcNAc...) asparagine glycosylation is present at Asn-274. Residues Asn-442, Asn-469, and Asn-515 are each glycosylated (N-linked (GlcNAc...) asparagine). An LRRCT domain is found at Ser-444–Asp-495. Ig-like C2-type domains lie at Pro-499 to Thr-598, Pro-603 to Thr-692, and Pro-697 to Ser-783. Disulfide bonds link Cys-520-Cys-581 and Cys-624-Cys-676. N-linked (GlcNAc...) asparagine glycosylation is found at Asn-688 and Asn-729. The cysteines at positions 718 and 767 are disulfide-linked. The helical transmembrane segment at Val-810–Ile-830 threads the bilayer. Asn-905, Asn-987, Asn-999, and Asn-1016 each carry an N-linked (GlcNAc...) asparagine glycan. The segment at Ser-1073–Glu-1093 is disordered. Over residues Glu-1083–Glu-1093 the composition is skewed to basic and acidic residues.

As to quaternary structure, interacts with EGFR, ERBB2 and ERBB4 (in vitro). In terms of tissue distribution, widely expressed.

It is found in the cell membrane. The protein localises to the cytoplasmic vesicle membrane. May play a role in craniofacial and inner ear morphogenesis during embryonic development. May act within the otic vesicle epithelium to control formation of the lateral semicircular canal in the inner ear, possibly by restricting the expression of NTN1. The sequence is that of Leucine-rich repeats and immunoglobulin-like domains protein 3 (LRIG3) from Homo sapiens (Human).